A 484-amino-acid chain; its full sequence is MKLIVKVFPEITIKSRPVRTKFIRQLAKNIRTVLRDLDPAVVVNGVWDNLELETRVTDPKALKEMGERLTCMPGIAHFLQIDEYPLGDFDDITEKCKQHYGDALAGKIFSVRCKRAGKHAFSSMDVEKYVGSKLRRECGAAGIDLKQPEIEVRIEVRDKRLFVIHSQHNGIGGYPLGALEQTLVLMSGGFDSTVAAYQILRRGLMTHFCFFNLGGRAHELGVMEVAHFIWKKYGSSQRVLFVSVPFEEVLGEILGKVDDSHMGVVLKRMMLRAASSIAERLHIDALVTGEAISQVSSQTLPNLSVIDCVTDKLVLRPLIVAHKQDIIDTADQIGTGDFARHMPEYCGVISVNPKTAAKRGRVEHEEQEFDMAVLERALANARLVPIDRVIDELGQDLQIEEVSEALAGQIVIDIRHPDAAEDDPLELAGIEVQTMPFYAVNARFKELDPTRQYLLYCDKGVMSRLHAHHLLSEGHANVRVYRPS.

Positions 63–167 (KEMGERLTCM…DKRLFVIHSQ (105 aa)) constitute a THUMP domain. ATP is bound by residues 185-186 (LM), Lys267, Gly289, and Gln298. Cys346 and Cys457 are disulfide-bonded. The region spanning 405-483 (ALAGQIVIDI…GHANVRVYRP (79 aa)) is the Rhodanese domain. Cys457 functions as the Cysteine persulfide intermediate in the catalytic mechanism.

Belongs to the ThiI family.

The protein resides in the cytoplasm. It carries out the reaction [ThiI sulfur-carrier protein]-S-sulfanyl-L-cysteine + a uridine in tRNA + 2 reduced [2Fe-2S]-[ferredoxin] + ATP + H(+) = [ThiI sulfur-carrier protein]-L-cysteine + a 4-thiouridine in tRNA + 2 oxidized [2Fe-2S]-[ferredoxin] + AMP + diphosphate. It catalyses the reaction [ThiS sulfur-carrier protein]-C-terminal Gly-Gly-AMP + S-sulfanyl-L-cysteinyl-[cysteine desulfurase] + AH2 = [ThiS sulfur-carrier protein]-C-terminal-Gly-aminoethanethioate + L-cysteinyl-[cysteine desulfurase] + A + AMP + 2 H(+). Its pathway is cofactor biosynthesis; thiamine diphosphate biosynthesis. In terms of biological role, catalyzes the ATP-dependent transfer of a sulfur to tRNA to produce 4-thiouridine in position 8 of tRNAs, which functions as a near-UV photosensor. Also catalyzes the transfer of sulfur to the sulfur carrier protein ThiS, forming ThiS-thiocarboxylate. This is a step in the synthesis of thiazole, in the thiamine biosynthesis pathway. The sulfur is donated as persulfide by IscS. The sequence is that of tRNA sulfurtransferase from Pseudomonas fluorescens (strain Pf0-1).